The primary structure comprises 299 residues: Sulfate adenylyltransferase subunit 2 (299 aa).

The protein belongs to the PAPS reductase family. CysD subfamily. In terms of assembly, sulfate-activating enzymes, NodP and NodQ, may be physically associated.

The catalysed reaction is sulfate + ATP + H(+) = adenosine 5'-phosphosulfate + diphosphate. Functionally, proposed to provide activated sulfate for transfer to nod factor. In Rhizobium meliloti (strain 1021) (Ensifer meliloti), this protein is Sulfate adenylyltransferase subunit 2 (nodP).